Here is a 587-residue protein sequence, read N- to C-terminus: Sulfite reductase [NADPH] hemoprotein beta-component (587 aa).

The segment covering 1–13 (MQSTDNDLSQSPP) has biased composition (polar residues). Positions 1–20 (MQSTDNDLSQSPPKLSADEQ) are disordered. [4Fe-4S] cluster contacts are provided by C439, C445, C484, and C488. C488 serves as a coordination point for siroheme.

This sequence belongs to the nitrite and sulfite reductase 4Fe-4S domain family. Alpha(8)-beta(8). The alpha component is a flavoprotein, the beta component is a hemoprotein. It depends on siroheme as a cofactor. Requires [4Fe-4S] cluster as cofactor.

It catalyses the reaction hydrogen sulfide + 3 NADP(+) + 3 H2O = sulfite + 3 NADPH + 4 H(+). It functions in the pathway sulfur metabolism; hydrogen sulfide biosynthesis; hydrogen sulfide from sulfite (NADPH route): step 1/1. In terms of biological role, component of the sulfite reductase complex that catalyzes the 6-electron reduction of sulfite to sulfide. This is one of several activities required for the biosynthesis of L-cysteine from sulfate. The chain is Sulfite reductase [NADPH] hemoprotein beta-component from Bordetella petrii (strain ATCC BAA-461 / DSM 12804 / CCUG 43448).